A 180-amino-acid chain; its full sequence is YY1-associated factor 2 (180 aa).

3 disordered regions span residues 1–24 (MGDK…GYWD), 47–120 (GTST…EVTV), and 132–180 (EKTK…GESH). A RanBP2-type zinc finger spans residues 19–48 (DEGYWDCSVCTFRNSAEAFKCMMCDVRKGT). Low complexity predominate over residues 62–73 (QQVTQQFVPPTQ). The segment covering 74 to 93 (SKKEKKDKVEKEKSEKETTS) has biased composition (basic and acidic residues). Basic residues predominate over residues 95 to 105 (KNSHKKTRPRL). 2 stretches are compositionally biased toward low complexity: residues 136-156 (SPPA…SSSD) and 163-174 (SRSSSPRGEASS). A Phosphoserine modification is found at S167.

Interacts with MYC, MYCN, RNF2/RING1B and YY1. Part of the E2F6.com-1 complex in G0 phase composed of E2F6, MGA, MAX, TFDP1, CBX3, BAT8, EUHMTASE1, RING1, RNF2, MBLR, L3MBTL2 and YAF2.

It is found in the nucleus. Functionally, binds to MYC and inhibits MYC-mediated transactivation. Also binds to MYCN and enhances MYCN-dependent transcriptional activation. Increases calpain 2-mediated proteolysis of YY1 in vitro. Component of the E2F6.com-1 complex, a repressive complex that methylates 'Lys-9' of histone H3, suggesting that it is involved in chromatin-remodeling. This chain is YY1-associated factor 2 (YAF2), found in Homo sapiens (Human).